Here is a 480-residue protein sequence, read N- to C-terminus: Alpha,alpha-trehalose-phosphate synthase [UDP-forming] 2 (480 aa).

Tyr-97 and Asp-151 together coordinate D-glucose 6-phosphate. Residues Arg-288 and Lys-293 each coordinate UDP. 2 residues coordinate UDP-alpha-D-glucose: Arg-288 and Lys-293. Residue Arg-326 coordinates D-glucose 6-phosphate. 387–395 serves as a coordination point for UDP-alpha-D-glucose; it reads DGMNLVSFE. 391 to 395 lines the UDP pocket; that stretch reads LVSFE.

Belongs to the glycosyltransferase 20 family.

It catalyses the reaction D-glucose 6-phosphate + UDP-alpha-D-glucose = alpha,alpha-trehalose 6-phosphate + UDP + H(+). The protein operates within carbohydrate biosynthesis. Its function is as follows. Synthase catalytic subunit of the trehalose synthase complex that catalyzes the production of trehalose from glucose-6-phosphate and UDP-alpha-D-glucose in a two step process. The protein is Alpha,alpha-trehalose-phosphate synthase [UDP-forming] 2 of Aspergillus niger.